The sequence spans 254 residues: MSISDNSREELGELPAGRPLQSEFNDDLDYPRLGSVTFRRGTLTENQQTMWNEKWPELGRVLEDELIDIDAWFGRTGAKTIVEIGSGTGTSTAAMAPLEADTNIIAVELYKPGLAKLMGAVVRGGIDNIRMVRGDGIEVLNRMFADGSLDGVRIFFPDPWPKARHNKRRIIQSGPLNLIAKKLKPGGVLHVATDHADYAEWINELVEVEPLLEYKGWPWPECPQLTDRQVITKFEGKGLDKDHTINEYLWQKKQ.

The segment covering 1-11 (MSISDNSREEL) has biased composition (basic and acidic residues). The disordered stretch occupies residues 1-25 (MSISDNSREELGELPAGRPLQSEFN). Positions 83, 108, 135, and 158 each coordinate S-adenosyl-L-methionine. D158 is a catalytic residue. K162 serves as a coordination point for substrate. Residues 164-169 (RHNKRR) are interaction with RNA. Substrate is bound by residues D194 and 232 to 235 (TKFE).

This sequence belongs to the class I-like SAM-binding methyltransferase superfamily. TrmB family.

It carries out the reaction guanosine(46) in tRNA + S-adenosyl-L-methionine = N(7)-methylguanosine(46) in tRNA + S-adenosyl-L-homocysteine. Its pathway is tRNA modification; N(7)-methylguanine-tRNA biosynthesis. Functionally, catalyzes the formation of N(7)-methylguanine at position 46 (m7G46) in tRNA. This Corynebacterium efficiens (strain DSM 44549 / YS-314 / AJ 12310 / JCM 11189 / NBRC 100395) protein is tRNA (guanine-N(7)-)-methyltransferase.